The following is a 491-amino-acid chain: Transmembrane protein 200A (491 aa).

The Cytoplasmic segment spans residues 1–61; that stretch reads MIATGGVITG…RGKIRLYSPS (61 aa). Positions 16–41 are disordered; the sequence is RQDSARSQQHVNLSPSPATQEKKPIR. Positions 20–34 are enriched in polar residues; it reads ARSQQHVNLSPSPAT. A helical transmembrane segment spans residues 62-82; it reads GFFLILGVLISIIGIAMAVLG. Topologically, residues 83 to 126 are extracellular; that stretch reads YWPQKEHFIDAETTLSTNETQVIRNEGGVVVRFFEQHLHSDKMK. N100 is a glycosylation site (N-linked (GlcNAc...) asparagine). The chain crosses the membrane as a helical span at residues 127–147; that stretch reads MLGPFTMGIGIFIFICANAIL. The Cytoplasmic segment spans residues 148–491; that stretch reads HENRDKETKI…LKRGTSETRF (344 aa). S350 carries the post-translational modification Phosphoserine.

Belongs to the TMEM200 family. Expressed in cerebellum.

Its subcellular location is the membrane. The protein is Transmembrane protein 200A (TMEM200A) of Homo sapiens (Human).